Here is a 484-residue protein sequence, read N- to C-terminus: uncharacterized protein (484 aa).

In terms of domain architecture, N-acetyltransferase spans 334–484 (IIIRQITDND…ENEWIYEVNL (151 aa)).

This is an uncharacterized protein from Methanocaldococcus jannaschii (strain ATCC 43067 / DSM 2661 / JAL-1 / JCM 10045 / NBRC 100440) (Methanococcus jannaschii).